We begin with the raw amino-acid sequence, 414 residues long: COUP transcription factor 2 (414 aa).

Positions 1 to 72 (MAMVVSTWRD…PGGPGSDKQQ (72 aa)) are disordered. Residues 27 to 37 (PPVPGPPPGAP) show a composition bias toward pro residues. Over residues 38–54 (HTPQTPGQGGPASTPAQ) the composition is skewed to low complexity. A Phosphothreonine modification is found at Thr-51. Positions 76–151 (HIECVVCGDK…VGMRREAVQR (76 aa)) form a DNA-binding region, nuclear receptor. NR C4-type zinc fingers lie at residues 79–99 (CVVC…CEGC) and 115–139 (CRAN…LKKC). The interaction with ZFPM2 stretch occupies residues 117–414 (ANRNCPIDQH…SFNWPYMAIQ (298 aa)). The region spanning 177–403 (YLSGYISLLL…TLIRDMLLSG (227 aa)) is the NR LBD domain. The interval 337-414 (LQEKSQCALE…SFNWPYMAIQ (78 aa)) is important for dimerization.

Belongs to the nuclear hormone receptor family. NR2 subfamily. Interacts with SQSTM1. Binds DNA as a dimer; homodimer or heterodimer with NR2F6. Interacts with NCOA1, NCOA2, NCOA3 and PPARGC1A. Interacts with ZFPM2.

The protein localises to the nucleus. In terms of biological role, ligand-activated transcription factor. Activated by high concentrations of 9-cis-retinoic acid and all-trans-retinoic acid, but not by dexamethasone, cortisol or progesterone (in vitro). Regulation of the apolipoprotein A-I gene transcription. Binds to DNA site A. May be required to establish ovary identity during early gonad development. In Rattus norvegicus (Rat), this protein is COUP transcription factor 2 (Nr2f2).